We begin with the raw amino-acid sequence, 299 residues long: Transcription factor BHLH148 (299 aa).

Residues 90–127 (RMGGGGGGGEKGEGEEMEEEEEVPQRRRRGQGADVESS) are disordered. Over residues 102-111 (EGEEMEEEEE) the composition is skewed to acidic residues. Residues 127-140 (SRGFRHMMRERQRR) are basic motif; degenerate. In terms of domain architecture, bHLH spans 127–176 (SRGFRHMMRERQRREKLSQSYADLYAMVSSRSKGDKNSIVQSAAIYIHEL). The helix-loop-helix motif stretch occupies residues 141–176 (EKLSQSYADLYAMVSSRSKGDKNSIVQSAAIYIHEL). The tract at residues 273 to 299 (ERNQPDSDAPFPGSKGWTQTSHVQNVF) is disordered. The span at 288–299 (GWTQTSHVQNVF) shows a compositional bias: polar residues.

The protein belongs to the bHLH protein family. Interacts with TIFY10A/JAZ6, TIFY10B/JAZ7, TIFY11A/JAZ9, TIFY11C/JAZ11, and TIFY11D/JAZ12.

The protein localises to the nucleus. Functionally, may act on an initial response of jasmonate-regulated gene expression toward drought tolerance as part of a BHLH148-TIFY11D/JAZ12-COI1A complex. The sequence is that of Transcription factor BHLH148 from Oryza sativa subsp. japonica (Rice).